We begin with the raw amino-acid sequence, 323 residues long: Probable cell division protein WhiA (323 aa).

The H-T-H motif DNA-binding region spans 275 to 309; the sequence is TLKELGEMLTTGQVSKSGINHRLRKLDQIAERLRS.

The protein belongs to the WhiA family.

In terms of biological role, involved in cell division and chromosome segregation. The chain is Probable cell division protein WhiA from Listeria monocytogenes serotype 4a (strain HCC23).